Reading from the N-terminus, the 352-residue chain is Protein RecA (352 aa).

Residue 67 to 74 (GPESSGKT) coordinates ATP.

It belongs to the RecA family.

It localises to the cytoplasm. In terms of biological role, can catalyze the hydrolysis of ATP in the presence of single-stranded DNA, the ATP-dependent uptake of single-stranded DNA by duplex DNA, and the ATP-dependent hybridization of homologous single-stranded DNAs. It interacts with LexA causing its activation and leading to its autocatalytic cleavage. This is Protein RecA from Chlamydia trachomatis serovar L2 (strain ATCC VR-902B / DSM 19102 / 434/Bu).